A 1098-amino-acid chain; its full sequence is Probable DNA-directed RNA polymerase (1098 aa).

Over residues 1–24 the composition is skewed to basic and acidic residues; it reads PIRESVRVSTDRDPDLEDEKREQL. Residues 1 to 26 are disordered; it reads PIRESVRVSTDRDPDLEDEKREQLGE. Catalysis depends on residues D663, K750, and D915.

It belongs to the phage and mitochondrial RNA polymerase family.

The protein resides in the mitochondrion. The enzyme catalyses RNA(n) + a ribonucleoside 5'-triphosphate = RNA(n+1) + diphosphate. Its function is as follows. DNA-dependent RNA polymerase catalyzes the transcription of DNA into RNA using the four ribonucleoside triphosphates as substrates. The sequence is that of Probable DNA-directed RNA polymerase from Zea mays (Maize).